We begin with the raw amino-acid sequence, 158 residues long: Transcription elongation factor GreB (158 aa).

It belongs to the GreA/GreB family. GreB subfamily.

In terms of biological role, necessary for efficient RNA polymerase transcription elongation past template-encoded arresting sites. The arresting sites in DNA have the property of trapping a certain fraction of elongating RNA polymerases that pass through, resulting in locked ternary complexes. Cleavage of the nascent transcript by cleavage factors such as GreA or GreB allows the resumption of elongation from the new 3'terminus. GreB releases sequences of up to 9 nucleotides in length. The chain is Transcription elongation factor GreB from Escherichia coli (strain K12).